A 407-amino-acid polypeptide reads, in one-letter code: Phosphopentomutase (407 aa).

Residues Asp-10, Asp-307, His-312, Asp-348, His-349, and His-360 each contribute to the Mn(2+) site.

This sequence belongs to the phosphopentomutase family. Mn(2+) serves as cofactor.

Its subcellular location is the cytoplasm. It carries out the reaction 2-deoxy-alpha-D-ribose 1-phosphate = 2-deoxy-D-ribose 5-phosphate. The catalysed reaction is alpha-D-ribose 1-phosphate = D-ribose 5-phosphate. The protein operates within carbohydrate degradation; 2-deoxy-D-ribose 1-phosphate degradation; D-glyceraldehyde 3-phosphate and acetaldehyde from 2-deoxy-alpha-D-ribose 1-phosphate: step 1/2. Functionally, isomerase that catalyzes the conversion of deoxy-ribose 1-phosphate (dRib-1-P) and ribose 1-phosphate (Rib-1-P) to deoxy-ribose 5-phosphate (dRib-5-P) and ribose 5-phosphate (Rib-5-P), respectively. This Methylobacterium nodulans (strain LMG 21967 / CNCM I-2342 / ORS 2060) protein is Phosphopentomutase.